The chain runs to 443 residues: Tol-Pal system protein TolB (443 aa).

Residues 1–33 (MKIGIINTKIRTVFSAFACMIAASLVCTMPARA) form the signal peptide.

The protein belongs to the TolB family. As to quaternary structure, the Tol-Pal system is composed of five core proteins: the inner membrane proteins TolA, TolQ and TolR, the periplasmic protein TolB and the outer membrane protein Pal. They form a network linking the inner and outer membranes and the peptidoglycan layer.

Its subcellular location is the periplasm. Part of the Tol-Pal system, which plays a role in outer membrane invagination during cell division and is important for maintaining outer membrane integrity. The sequence is that of Tol-Pal system protein TolB from Brucella anthropi (strain ATCC 49188 / DSM 6882 / CCUG 24695 / JCM 21032 / LMG 3331 / NBRC 15819 / NCTC 12168 / Alc 37) (Ochrobactrum anthropi).